A 231-amino-acid chain; its full sequence is Acyltransferase PGAP2 (231 aa).

The Cytoplasmic segment spans residues 1–22; it reads MQQVPYGSVDRDKPLIRVPFTR. Residues 23 to 43 traverse the membrane as a helical segment; the sequence is LAVITVCLPLLGLVACIVLAM. At 44–78 the chain is on the lumenal side; the sequence is LYHYNDATYTHCQVPNYLPSISAAISLTPERYIWR. The helical transmembrane segment at 79–99 threads the bilayer; that stretch reads FSIGLHSAPRFLVAAAYLSFY. At 100 to 110 the chain is on the cytoplasmic side; sequence RGRFSRRLTEQ. The chain crosses the membrane as a helical span at residues 111–131; the sequence is LLSGFTFLLALSENVGLLLLT. Over 132 to 146 the chain is Lumenal; sequence YVSSTETYSVHKSGF. A helical transmembrane segment spans residues 147-167; sequence ILFIGSSLFHMLCTCKLWSLI. Residues 168-179 are Cytoplasmic-facing; the sequence is VKYSISSEEMMS. The helical transmembrane segment at 180-200 threads the bilayer; it reads YWFKLRLFLFNGGCCVLAVYF. At 201-231 the chain is on the lumenal side; that stretch reads YRRHNTYCEEGITHASRCVSIWWCCPTWPST.

Belongs to the PGAP2 family.

Its subcellular location is the golgi apparatus membrane. Its function is as follows. Involved in the fatty acid remodeling steps of GPI-anchor maturation where the unsaturated acyl chain at sn-2 of inositol phosphate is replaced by a saturated stearoyl chain. May catalyze the second step of the fatty acid remodeling, by reacylating a lyso-GPI intermediate at sn-2 of inositol phosphate by a saturated chain. The fatty acid remodeling steps is critical for the integration of GPI-APs into lipid rafts. In Danio rerio (Zebrafish), this protein is Acyltransferase PGAP2.